A 264-amino-acid polypeptide reads, in one-letter code: Cercarial protease (264 aa).

An N-terminal signal peptide occupies residues 1 to 19 (MSNRWRFVVVVTLFTYCLT). Positions 20 to 27 (FERVSTWL) are excised as a propeptide. In terms of domain architecture, Peptidase S1 spans 28–264 (IRSGEPVQHP…RMLDFVRSNI (237 aa)). A disulfide bridge links C53 with C69. Residues H68 and D126 each act as charge relay system in the active site. C192 and C202 form a disulfide bridge. The active-site Charge relay system is S218.

This sequence belongs to the peptidase S1 family. In terms of tissue distribution, acetabular (penetration) glands.

With respect to regulation, activated by an autocatalytic mechanism. This protease cleaves elastin and thus facilitates penetration of schistosome parasite larvae through elastin-rich tissue of the host. This Schistosoma mansoni (Blood fluke) protein is Cercarial protease.